Here is an 80-residue protein sequence, read N- to C-terminus: Serine protease inhibitor Kazal-type 6 (80 aa).

A signal peptide spans 1–23 (MKTSGVFLLLSLALFCFFSGVFG). A Pyrrolidone carboxylic acid modification is found at Gln24. In terms of domain architecture, Kazal-like spans 24–80 (QGAQVDCAEFKDPKVYCTRESNPHCGSDGQTYGNKCAFCKAVMKSGGKINLKHRGKC). 3 disulfide bridges follow: Cys30-Cys62, Cys40-Cys59, and Cys48-Cys80.

Seminal plasma.

The protein resides in the secreted. In terms of biological role, serine protease inhibitor selective for kallikreins. Efficiently inhibits KLK4, KLK5, KLK6, KLK7, KLK12, KLK13 and KLK14. Doesn't inhibit KLK8. Inhibits acrosin, trypsin, and chymotrypsin. In Bos taurus (Bovine), this protein is Serine protease inhibitor Kazal-type 6 (SPINK6).